The sequence spans 331 residues: GTPase Obg (331 aa).

An Obg domain is found at 1 to 159; it reads MHFIDEVKIY…MWIHLRLKLL (159 aa). In terms of domain architecture, OBG-type G spans 160-327; it reads SDVGLIGLPN…IVKLALEIIK (168 aa). Residues 166 to 173, 191 to 195, 212 to 215, 279 to 282, and 308 to 310 each bind GTP; these read GLPNAGKS, FTTLV, DIPG, NKCD, and STY. The Mg(2+) site is built by Ser-173 and Thr-193.

The protein belongs to the TRAFAC class OBG-HflX-like GTPase superfamily. OBG GTPase family. As to quaternary structure, monomer. Mg(2+) serves as cofactor.

It is found in the cytoplasm. Its function is as follows. An essential GTPase which binds GTP, GDP and possibly (p)ppGpp with moderate affinity, with high nucleotide exchange rates and a fairly low GTP hydrolysis rate. Plays a role in control of the cell cycle, stress response, ribosome biogenesis and in those bacteria that undergo differentiation, in morphogenesis control. This chain is GTPase Obg, found in Rickettsia prowazekii (strain Madrid E).